Consider the following 291-residue polypeptide: N-acetylmannosamine kinase (291 aa).

Residues 5 to 12 and 132 to 139 each bind ATP; these read AIDIGGTK and GVGGGVVS. His-156, Cys-166, Cys-168, and Cys-173 together coordinate Zn(2+).

The protein belongs to the ROK (NagC/XylR) family. NanK subfamily. As to quaternary structure, homodimer.

The enzyme catalyses an N-acyl-D-mannosamine + ATP = an N-acyl-D-mannosamine 6-phosphate + ADP + H(+). The protein operates within amino-sugar metabolism; N-acetylneuraminate degradation; D-fructose 6-phosphate from N-acetylneuraminate: step 2/5. Functionally, catalyzes the phosphorylation of N-acetylmannosamine (ManNAc) to ManNAc-6-P. This chain is N-acetylmannosamine kinase, found in Escherichia coli O1:K1 / APEC.